The chain runs to 479 residues: Ribosomal RNA small subunit methyltransferase F (479 aa).

S-adenosyl-L-methionine is bound by residues 125-131 (AAAPGSK), Glu149, Asp176, and Asp194. Cys247 (nucleophile) is an active-site residue.

This sequence belongs to the class I-like SAM-binding methyltransferase superfamily. RsmB/NOP family.

It is found in the cytoplasm. It carries out the reaction cytidine(1407) in 16S rRNA + S-adenosyl-L-methionine = 5-methylcytidine(1407) in 16S rRNA + S-adenosyl-L-homocysteine + H(+). In terms of biological role, specifically methylates the cytosine at position 1407 (m5C1407) of 16S rRNA. The protein is Ribosomal RNA small subunit methyltransferase F of Escherichia coli O157:H7 (strain EC4115 / EHEC).